The following is an 81-amino-acid chain: ATP synthase subunit c (81 aa).

A run of 2 helical transmembrane segments spans residues 7–27 and 57–77; these read AASVLSAALAIGLGSLGPGLG and LAFMEALTIYGLVVALVLLFA.

This sequence belongs to the ATPase C chain family. F-type ATPases have 2 components, F(1) - the catalytic core - and F(0) - the membrane proton channel. F(1) has five subunits: alpha(3), beta(3), gamma(1), delta(1), epsilon(1). F(0) has four main subunits: a(1), b(1), b'(1) and c(10-14). The alpha and beta chains form an alternating ring which encloses part of the gamma chain. F(1) is attached to F(0) by a central stalk formed by the gamma and epsilon chains, while a peripheral stalk is formed by the delta, b and b' chains.

The protein resides in the cellular thylakoid membrane. F(1)F(0) ATP synthase produces ATP from ADP in the presence of a proton or sodium gradient. F-type ATPases consist of two structural domains, F(1) containing the extramembraneous catalytic core and F(0) containing the membrane proton channel, linked together by a central stalk and a peripheral stalk. During catalysis, ATP synthesis in the catalytic domain of F(1) is coupled via a rotary mechanism of the central stalk subunits to proton translocation. Its function is as follows. Key component of the F(0) channel; it plays a direct role in translocation across the membrane. A homomeric c-ring of between 10-14 subunits forms the central stalk rotor element with the F(1) delta and epsilon subunits. This is ATP synthase subunit c from Synechococcus sp. (strain JA-3-3Ab) (Cyanobacteria bacterium Yellowstone A-Prime).